Reading from the N-terminus, the 361-residue chain is tRNA/tmRNA (uracil-C(5))-methyltransferase (361 aa).

S-adenosyl-L-methionine is bound by residues Q183, Y211, N216, E232, and D294. The Nucleophile role is filled by C319. The active-site Proton acceptor is the E353.

The protein belongs to the class I-like SAM-binding methyltransferase superfamily. RNA M5U methyltransferase family. TrmA subfamily.

The enzyme catalyses uridine(54) in tRNA + S-adenosyl-L-methionine = 5-methyluridine(54) in tRNA + S-adenosyl-L-homocysteine + H(+). The catalysed reaction is uridine(341) in tmRNA + S-adenosyl-L-methionine = 5-methyluridine(341) in tmRNA + S-adenosyl-L-homocysteine + H(+). Dual-specificity methyltransferase that catalyzes the formation of 5-methyluridine at position 54 (m5U54) in all tRNAs, and that of position 341 (m5U341) in tmRNA (transfer-mRNA). This chain is tRNA/tmRNA (uracil-C(5))-methyltransferase, found in Acinetobacter baumannii (strain AYE).